The following is a 708-amino-acid chain: Vertnin (708 aa).

2 disordered regions span residues 473–499 (PWKG…FLPP) and 561–636 (APAL…PVAE). The span at 568-582 (GLREAKEKQEKEAGR) shows a compositional bias: basic and acidic residues.

It belongs to the vertnin family.

This chain is Vertnin (VRTN), found in Ailuropoda melanoleuca (Giant panda).